Here is a 329-residue protein sequence, read N- to C-terminus: MTPKLIIHGGASSLDDKGGLATVRQSLHQIVAAVYETLTAGGSAMDAVVQGCELLENEPRFNAGTGSVLQSDGQVRMSASLMDGDRQNFSGVINVSRIKNPIQMAQFLQGQTDRILSDYGAADLAREMQLPIYDPATDFRIQEWMEERGEDVRKKMARLIADPTVGIEARKGTIGVVALDANGKIAAGTSTGGKGLERIGRVSDSAMPAGNYATRFAGVSCTGVGEDIINECLAAKVVIRVKDGQNLAQAMAKSITEALENNTDLGAIALDHQGHIAWGKTCPVLLAAYHTGTAIGDTLELTDGDHYGNASILKLQKTVKKIQTKTRGK.

Thr173 functions as the Nucleophile in the catalytic mechanism. Residues 201–204 (RVSD) and 222–225 (TGVG) contribute to the substrate site.

This sequence belongs to the Ntn-hydrolase family. Heterotetramer of two alpha and two beta chains arranged as a dimer of alpha/beta heterodimers. In terms of processing, cleaved into an alpha and beta chain by autocatalysis; this activates the enzyme. The N-terminal residue of the beta subunit is responsible for the nucleophile hydrolase activity.

The catalysed reaction is Cleavage of a beta-linked Asp residue from the N-terminus of a polypeptide.. Functionally, degrades proteins damaged by L-isoaspartyl residue formation (also known as beta-Asp residues). Probably performs the final step in the degradation of the reserve polymer cyanophycin (depolymerizes the building block L-beta-Asp-Arg). Also has L-asparaginase activity. This Synechocystis sp. (strain ATCC 27184 / PCC 6803 / Kazusa) protein is Isoaspartyl peptidase/L-asparaginase.